Reading from the N-terminus, the 440-residue chain is MASSSKALIESIGSLDKDSYVSLLSKLIGESKFVQNNPPELIPQEDLIVKHVLDSLRPYSTETGGGPLVINHVAYHSGRGNLIVEYPGSVPGKILSFVGMHMDVVTANPDDWEFDPFSLSIDGDKLRGRGTTDCLGHVALVTELMKKLGQAKPALKSTVVAVFIASEENSSIPGVGVDMLVKDKLLDKLKSGPLYWIDTADKQPCVGTGGMIPWKLQFTGKLFHSGLAHKAINAMELAMEGLKEIQARFYRDFPPHPQEEVYGFATPSTMKPTQWCYPAGGINQIPGECTVSGDVRLTPFYDVKEVITKLQEYVDDINGNIERLETRGPVSKYVLPDENLRGRLTLSFDEASAGVACNLDSPGFHVLCKATEEVVGHVKPYSITGTLPLIRDLQDEGFDVQTSGYGLMATYHAKNEYCLLTDMCQGFDVFIRIISQLEQV.

His-101 is a binding site for Zn(2+). The active site involves Asp-103. Asp-133 is a Zn(2+) binding site. The Proton acceptor role is filled by Glu-167. Glu-168 and His-412 together coordinate Zn(2+).

The protein belongs to the peptidase M20A family. ArgE subfamily. In terms of assembly, homodimer. Zn(2+) is required as a cofactor. It depends on Co(2+) as a cofactor.

It carries out the reaction N(2)-acetyl-L-ornithine + H2O = L-ornithine + acetate. It participates in amino-acid biosynthesis; L-arginine biosynthesis; L-ornithine from N(2)-acetyl-L-ornithine (linear): step 1/1. The sequence is that of Acetylornithine deacetylase from Arabidopsis thaliana (Mouse-ear cress).